The sequence spans 1710 residues: Extracellular matrix protein A (1710 aa).

Positions 1–22 are cleaved as a signal peptide; that stretch reads MKISIFILLLFISSMVIISVNA. 66 Cys-rich CT repeats span residues 43–70, 71–94, 95–117, 118–141, 142–165, 166–189, 190–213, 214–237, 238–261, 262–285, 286–309, 310–333, 334–357, 358–381, 382–405, 406–429, 430–453, 454–477, 478–501, 502–525, 526–549, 550–573, 574–597, 598–621, 622–645, 646–669, 670–693, 694–717, 718–741, 742–765, 766–789, 790–813, 814–837, 838–861, 862–885, 886–909, 910–933, 934–957, 958–981, 982–1005, 1006–1029, 1030–1053, 1054–1077, 1078–1101, 1102–1125, 1126–1149, 1150–1173, 1174–1197, 1198–1221, 1222–1245, 1246–1269, 1270–1293, 1294–1317, 1318–1341, 1342–1365, 1366–1389, 1390–1413, 1414–1437, 1438–1461, 1462–1485, 1486–1509, 1511–1534, 1558–1581, 1582–1606, 1608–1632, and 1658–1682; these read NRWS…CDDE, NACT…VDDK, NPCT…CDDK, NACT…CDDN, NPCT…VDDN, NPCT…VDDL, NKCT…CDDN, NACT…CDDK, NQCT…TDDN, NKCT…TDDN, KACT…CDDN, NACT…CDDS, NKCT…CDDS, NACT…TDDN, NACT…CDDR, NPCT…TDDS, DKCT…CDDN, DACT…TDDN, NKCT…CDDG, NKCT…CPKP, DKCS…CTSD, NKCQ…CDDG, NACT…LPKN, NKCI…CECD, and NPKT…VITS. N-linked (GlcNAc...) asparagine glycans are attached at residues N150 and N151. Residues N270 and N271 are each glycosylated (N-linked (GlcNAc...) asparagine). N415 carries an N-linked (GlcNAc...) asparagine glycan. N535 carries N-linked (GlcNAc...) asparagine glycosylation. An N-linked (GlcNAc...) asparagine glycan is attached at N655. N-linked (GlcNAc...) asparagine glycosylation is present at N751. Residues N871, N894, and N895 are each glycosylated (N-linked (GlcNAc...) asparagine). N1015 is a glycosylation site (N-linked (GlcNAc...) asparagine). N-linked (GlcNAc...) asparagine glycans are attached at residues N1110 and N1111. N-linked (GlcNAc...) asparagine glycosylation occurs at N1183. N-linked (GlcNAc...) asparagine glycosylation is present at N1255. A glycan (N-linked (GlcNAc...) asparagine) is linked at N1351. N-linked (GlcNAc...) asparagine glycosylation occurs at N1530. An N-linked (GlcNAc...) asparagine glycan is attached at N1624.

Its subcellular location is the secreted. This Dictyostelium discoideum (Social amoeba) protein is Extracellular matrix protein A (ecmA).